The following is a 479-amino-acid chain: Aspartyl/glutamyl-tRNA(Asn/Gln) amidotransferase subunit B (479 aa).

This sequence belongs to the GatB/GatE family. GatB subfamily. As to quaternary structure, heterotrimer of A, B and C subunits.

It catalyses the reaction L-glutamyl-tRNA(Gln) + L-glutamine + ATP + H2O = L-glutaminyl-tRNA(Gln) + L-glutamate + ADP + phosphate + H(+). It carries out the reaction L-aspartyl-tRNA(Asn) + L-glutamine + ATP + H2O = L-asparaginyl-tRNA(Asn) + L-glutamate + ADP + phosphate + 2 H(+). Its function is as follows. Allows the formation of correctly charged Asn-tRNA(Asn) or Gln-tRNA(Gln) through the transamidation of misacylated Asp-tRNA(Asn) or Glu-tRNA(Gln) in organisms which lack either or both of asparaginyl-tRNA or glutaminyl-tRNA synthetases. The reaction takes place in the presence of glutamine and ATP through an activated phospho-Asp-tRNA(Asn) or phospho-Glu-tRNA(Gln). The sequence is that of Aspartyl/glutamyl-tRNA(Asn/Gln) amidotransferase subunit B from Mycoplasma mycoides subsp. mycoides SC (strain CCUG 32753 / NCTC 10114 / PG1).